We begin with the raw amino-acid sequence, 117 residues long: Ig lambda-1 chain V region (117 aa).

The signal sequence occupies residues 1-20 (MAWISLILSLLALSSGGAIS). Gln-21 carries the pyrrolidone carboxylic acid modification. An Ig-like domain is found at 21–117 (QAVVTQESAL…YFCALWYSNH (97 aa)).

The protein is Ig lambda-1 chain V region of Mus musculus (Mouse).